The sequence spans 344 residues: Phosphate acyltransferase (344 aa).

Belongs to the PlsX family. In terms of assembly, homodimer. Probably interacts with PlsY.

Its subcellular location is the cytoplasm. It catalyses the reaction a fatty acyl-[ACP] + phosphate = an acyl phosphate + holo-[ACP]. It participates in lipid metabolism; phospholipid metabolism. Its function is as follows. Catalyzes the reversible formation of acyl-phosphate (acyl-PO(4)) from acyl-[acyl-carrier-protein] (acyl-ACP). This enzyme utilizes acyl-ACP as fatty acyl donor, but not acyl-CoA. The protein is Phosphate acyltransferase of Cronobacter sakazakii (strain ATCC BAA-894) (Enterobacter sakazakii).